Here is a 683-residue protein sequence, read N- to C-terminus: Synaptic vesicle glycoprotein 2B (683 aa).

Positions 1–42 (MDDYKYQDNYGGYAPSDGYYRGNESNPEEDAQSDVTEGHDEE) are disordered. At 1 to 108 (MDDYKYQDNY…MDECGHGRFQ (108 aa)) the chain is on the cytoplasmic side. The residue at position 33 (serine 33) is a Phosphoserine. The residue at position 36 (threonine 36) is a Phosphothreonine. A helical transmembrane segment spans residues 109–129 (WILFFVLGLALMADGVEVFVV). Residues 130–148 (SFALPSAEKDMCLSSSKKG) lie on the Extracellular side of the membrane. A helical membrane pass occupies residues 149–169 (MLGMIVYLGMMAGAFILGGLA). Residues 170 to 182 (DKLGRKRVLSMSL) lie on the Cytoplasmic side of the membrane. Residues 183–203 (AVNASFASLSSFVQGYGAFLF) form a helical membrane-spanning segment. At 204–205 (CR) the chain is on the extracellular side. A helical membrane pass occupies residues 206–226 (LISGIGIGGALPIVFAYFSEF). The Cytoplasmic portion of the chain corresponds to 227 to 237 (LSREKRGEHLS). The helical transmembrane segment at 238–258 (WLGIFWMTGGLYASAMAWSII) threads the bilayer. Over 259–277 (PHYGWGFSMGTNYHFHSWR) the chain is Extracellular. Residues 278-298 (VFVIVCALPCTVSMVALKFMP) traverse the membrane as a helical segment. At 299–390 (ESPRFLLEMG…CVMGPYRMNT (92 aa)) the chain is on the cytoplasmic side. A helical transmembrane segment spans residues 391–411 (LILAVVWFAMAFSYYGLTVWF). Residues 412–535 (PDMIRYFQDE…CHMDLEQDND (124 aa)) lie on the Extracellular side of the membrane. The residue at position 423 (tyrosine 423) is a Phosphotyrosine. Asparagine 441, asparagine 491, and asparagine 516 each carry an N-linked (GlcNAc...) asparagine glycan. Residues 536-556 (FLIYLVSFLGSLSVLPGNIIS) form a helical membrane-spanning segment. Over 557–565 (ALLMDRIGR) the chain is Cytoplasmic. The helical transmembrane segment at 566–586 (LKMIGGSMLISAVCCFFLFFG) threads the bilayer. The Extracellular segment spans residues 587 to 592 (NSESAM). Residues 593–613 (IGWQCLFCGTSIAAWNALDVI) form a helical membrane-spanning segment. Over 614–626 (TVELYPTNQRATA) the chain is Cytoplasmic. A helical membrane pass occupies residues 627–649 (FGILNGLCKFGAILGNTIFASFV). Topologically, residues 650 to 653 (GITK) are extracellular. The chain crosses the membrane as a helical span at residues 654–672 (VVPILLAAASLVGGGLIAL). At 673–683 (RLPETREQVLM) the chain is on the cytoplasmic side.

The protein belongs to the major facilitator superfamily. As to quaternary structure, interacts with SYT1 in a calcium-independent manner. Forms a complex with SYT1, syntaxin-1 and SNAP25. In terms of assembly, (Microbial infection) Interacts with C.botulinum neurotoxin type A2 (BoNT/A, botA). Interaction is improved by glycosylation of SV2. In terms of processing, N-glycosylated. The N-terminal cytoplasmic domain is phosphorylated by CK1.

The protein localises to the cytoplasmic vesicle. It is found in the secretory vesicle. The protein resides in the synaptic vesicle membrane. Its subcellular location is the acrosome. Functionally, probably plays a role in the control of regulated secretion in neural and endocrine cells. Its function is as follows. (Microbial infection) Receptor for the C.botulinum neurotoxin type A2 (BoNT/A, botA); glycosylation is not essential but enhances the interaction. Probably also serves as a receptor for the closely related C.botulinum neurotoxin type A1. The chain is Synaptic vesicle glycoprotein 2B (SV2B) from Homo sapiens (Human).